The following is a 139-amino-acid chain: Histone H3-like 5 (139 aa).

The span at 1 to 10 (MARTKQTARI) shows a compositional bias: polar residues. The tract at residues 1–43 (MARTKQTARISTGGKAPRKQLAPKAARQSAPATGGVKKPHRFR) is disordered. At K5 the chain carries N6,N6,N6-trimethyllysine; alternate. K5 is subject to N6,N6-dimethyllysine; alternate. K5 is modified (N6-methyllysine; alternate). Phosphoserine is present on S11. At T12 the chain carries Phosphothreonine. The residue at position 15 (K15) is an N6-acetyllysine. Residues K19 and K24 each carry the N6-methyllysine; alternate modification. Residues K19 and K24 each carry the N6-acetyllysine; alternate modification. Residue S29 is modified to Phosphoserine. The residue at position 37 (K37) is an N6,N6,N6-trimethyllysine; alternate. Residue K37 is modified to N6,N6-dimethyllysine; alternate. K37 is modified (N6-methyllysine; alternate).

Belongs to the histone H3 family. As to quaternary structure, the nucleosome is a histone octamer containing two molecules each of H2A, H2B, H3 and H4 assembled in one H3-H4 heterotetramer and two H2A-H2B heterodimers. The octamer wraps approximately 147 bp of DNA.

It localises to the nucleus. It is found in the chromosome. Functionally, core component of nucleosome. Nucleosomes wrap and compact DNA into chromatin, limiting DNA accessibility to the cellular machineries which require DNA as a template. Histones thereby play a central role in transcription regulation, DNA repair, DNA replication and chromosomal stability. DNA accessibility is regulated via a complex set of post-translational modifications of histones, also called histone code, and nucleosome remodeling. The protein is Histone H3-like 5 of Arabidopsis thaliana (Mouse-ear cress).